A 627-amino-acid polypeptide reads, in one-letter code: Threonine--tRNA ligase (627 aa).

The interval 1 to 147 is editing domain; sequence MRMLLIHSDY…TIVPSGEAKA (147 aa). Positions 208-507 are catalytic; that stretch reads PHVRIMLEQE…QSKGIKPMFP (300 aa). Zn(2+)-binding residues include Cys300, His352, and His476.

The protein belongs to the class-II aminoacyl-tRNA synthetase family. In terms of assembly, homodimer. Requires Zn(2+) as cofactor.

It localises to the cytoplasm. The catalysed reaction is tRNA(Thr) + L-threonine + ATP = L-threonyl-tRNA(Thr) + AMP + diphosphate + H(+). Its function is as follows. Catalyzes the attachment of threonine to tRNA(Thr) in a two-step reaction: L-threonine is first activated by ATP to form Thr-AMP and then transferred to the acceptor end of tRNA(Thr). Also edits incorrectly charged L-seryl-tRNA(Thr). The sequence is that of Threonine--tRNA ligase from Thermococcus onnurineus (strain NA1).